The following is a 668-amino-acid chain: Packaging protein UL32 homolog (668 aa).

Over residues 1–10 (MNPSTHVSSN) the composition is skewed to polar residues. The tract at residues 1-35 (MNPSTHVSSNGPTTPPHGPHTTFLPPTSPAPSTSS) is disordered. A compositionally biased stretch (low complexity) spans 19 to 35 (PHTTFLPPTSPAPSTSS). Residues C200, C203, H276, and C282 each coordinate Zn(2+). The interval 200 to 282 (CNLCAIISIC…FHLHFFINRC (83 aa)) is zinc finger 1. Composition is skewed to basic and acidic residues over residues 392–401 (SEREDARMMM) and 410–419 (GEKGGDDPGR). The tract at residues 392–430 (SEREDARMMMEEEEDEEGGEKGGDDPGRHNGGGTSGGFS) is disordered. Residues C459, C462, H567, and C574 each coordinate Zn(2+). The tract at residues 459-574 (CLLCELMACS…YKHFFCDPQC (116 aa)) is zinc finger 2.

This sequence belongs to the herpesviridae UL32 protein family.

The protein resides in the host cytoplasm. It is found in the host nucleus. Plays a role in efficient localization of neo-synthesized capsids to nuclear replication compartments, thereby controlling cleavage and packaging of virus genomic DNA. This Homo sapiens (Human) protein is Packaging protein UL32 homolog (UL52).